The primary structure comprises 116 residues: UPF0122 protein CA_C1753 (116 aa).

This sequence belongs to the UPF0122 family.

Its function is as follows. Might take part in the signal recognition particle (SRP) pathway. This is inferred from the conservation of its genetic proximity to ftsY/ffh. May be a regulatory protein. This Clostridium acetobutylicum (strain ATCC 824 / DSM 792 / JCM 1419 / IAM 19013 / LMG 5710 / NBRC 13948 / NRRL B-527 / VKM B-1787 / 2291 / W) protein is UPF0122 protein CA_C1753.